The sequence spans 379 residues: Homoserine O-succinyltransferase (379 aa).

One can recognise an AB hydrolase-1 domain in the interval 51–360 (NAVLICHALS…DSPYGHDAFL (310 aa)). S157 (nucleophile) is an active-site residue. Position 227 (R227) interacts with substrate. Active-site residues include D323 and H356. A substrate-binding site is contributed by D357.

The protein belongs to the AB hydrolase superfamily. MetX family. As to quaternary structure, homodimer.

The protein resides in the cytoplasm. The enzyme catalyses L-homoserine + succinyl-CoA = O-succinyl-L-homoserine + CoA. It participates in amino-acid biosynthesis; L-methionine biosynthesis via de novo pathway; O-succinyl-L-homoserine from L-homoserine: step 1/1. With respect to regulation, requires MetW for activity. Transfers a succinyl group from succinyl-CoA to L-homoserine, forming succinyl-L-homoserine. This chain is Homoserine O-succinyltransferase, found in Pseudomonas putida (strain ATCC 47054 / DSM 6125 / CFBP 8728 / NCIMB 11950 / KT2440).